Consider the following 89-residue polypeptide: Small ribosomal subunit protein uS15 (89 aa).

It belongs to the universal ribosomal protein uS15 family. As to quaternary structure, part of the 30S ribosomal subunit. Forms a bridge to the 50S subunit in the 70S ribosome, contacting the 23S rRNA.

In terms of biological role, one of the primary rRNA binding proteins, it binds directly to 16S rRNA where it helps nucleate assembly of the platform of the 30S subunit by binding and bridging several RNA helices of the 16S rRNA. Its function is as follows. Forms an intersubunit bridge (bridge B4) with the 23S rRNA of the 50S subunit in the ribosome. This is Small ribosomal subunit protein uS15 from Tolumonas auensis (strain DSM 9187 / NBRC 110442 / TA 4).